The following is a 170-amino-acid chain: Putative pre-16S rRNA nuclease (170 aa).

This sequence belongs to the YqgF nuclease family.

The protein resides in the cytoplasm. Functionally, could be a nuclease involved in processing of the 5'-end of pre-16S rRNA. The protein is Putative pre-16S rRNA nuclease of Synechococcus sp. (strain JA-2-3B'a(2-13)) (Cyanobacteria bacterium Yellowstone B-Prime).